Here is a 922-residue protein sequence, read N- to C-terminus: Probable outer membrane protein pmp1 (922 aa).

An N-terminal signal peptide occupies residues 1–26 (MRFSLCGFPLVFSFTLLSVFDTSLSA). The 303-residue stretch at 620–922 (SLQTDRGLWI…NINCGSKFRF (303 aa)) folds into the Autotransporter domain.

Belongs to the PMP outer membrane protein family.

It localises to the secreted. The protein localises to the cell wall. It is found in the cell outer membrane. The chain is Probable outer membrane protein pmp1 (pmp1) from Chlamydia pneumoniae (Chlamydophila pneumoniae).